We begin with the raw amino-acid sequence, 415 residues long: Serine hydroxymethyltransferase 2 (415 aa).

(6S)-5,6,7,8-tetrahydrofolate-binding positions include leucine 122 and 126-128 (GHL). Lysine 230 is subject to N6-(pyridoxal phosphate)lysine.

This sequence belongs to the SHMT family. As to quaternary structure, homodimer. Pyridoxal 5'-phosphate is required as a cofactor.

The protein localises to the cytoplasm. It catalyses the reaction (6R)-5,10-methylene-5,6,7,8-tetrahydrofolate + glycine + H2O = (6S)-5,6,7,8-tetrahydrofolate + L-serine. The protein operates within one-carbon metabolism; tetrahydrofolate interconversion. Its pathway is amino-acid biosynthesis; glycine biosynthesis; glycine from L-serine: step 1/1. Catalyzes the reversible interconversion of serine and glycine with tetrahydrofolate (THF) serving as the one-carbon carrier. This reaction serves as the major source of one-carbon groups required for the biosynthesis of purines, thymidylate, methionine, and other important biomolecules. Also exhibits THF-independent aldolase activity toward beta-hydroxyamino acids, producing glycine and aldehydes, via a retro-aldol mechanism. In Burkholderia lata (strain ATCC 17760 / DSM 23089 / LMG 22485 / NCIMB 9086 / R18194 / 383), this protein is Serine hydroxymethyltransferase 2.